The following is a 364-amino-acid chain: Geissoschizine synthase (364 aa).

A Zn(2+)-binding site is contributed by C51. N52 is a binding site for NADP(+). The Zn(2+) site is built by H73, E74, C104, C107, C110, C118, and C168. Residues L194, G196, L197, S216, T217, S218, K221, R261, V280, A282, S304, T306, and R351 each contribute to the NADP(+) site.

The protein belongs to the zinc-containing alcohol dehydrogenase family. Class-III subfamily. In terms of assembly, homodimer. Requires Zn(2+) as cofactor. In terms of tissue distribution, expressed in leaf epidermis.

It carries out the reaction (19E)-geissoschizine + NADP(+) = 4,21-dehydrogeissoschizine + NADPH. The protein operates within alkaloid biosynthesis. In terms of biological role, component of the seco-iridoid and derivatives monoterpenoid indole alkaloids (MIAs, e.g. catharanthine, tabersonine, vincadifformine, vindoline, vincristine, quinine and strychnine) biosynthesis pathway. During the conversion of strictosidine aglycone to geissoschizine, catalyzes iminium reduction on 4,21-dehydrogeissoschizine to produce 19E-geissoschizine, precursor of catharanthine and tabersonine derivatives. May also trigger the production of reactive intermediate used by the HL1, HL2, HL3 and HL4 to form catharanthine, vincadifformine and tabersonine. The polypeptide is Geissoschizine synthase (Catharanthus roseus (Madagascar periwinkle)).